A 351-amino-acid polypeptide reads, in one-letter code: Ferredoxin--NADP reductase (351 aa).

Threonine 14, aspartate 33, glutamine 41, tyrosine 46, alanine 86, phenylalanine 121, aspartate 287, and threonine 328 together coordinate FAD.

It belongs to the ferredoxin--NADP reductase type 2 family. In terms of assembly, homodimer. Requires FAD as cofactor.

The catalysed reaction is 2 reduced [2Fe-2S]-[ferredoxin] + NADP(+) + H(+) = 2 oxidized [2Fe-2S]-[ferredoxin] + NADPH. In Flavobacterium psychrophilum (strain ATCC 49511 / DSM 21280 / CIP 103535 / JIP02/86), this protein is Ferredoxin--NADP reductase.